Reading from the N-terminus, the 70-residue chain is Large ribosomal subunit protein bL31 (70 aa).

Zn(2+)-binding residues include Cys-16, Cys-18, Cys-37, and Cys-40.

This sequence belongs to the bacterial ribosomal protein bL31 family. Type A subfamily. As to quaternary structure, part of the 50S ribosomal subunit. Zn(2+) serves as cofactor.

In terms of biological role, binds the 23S rRNA. The chain is Large ribosomal subunit protein bL31 from Haemophilus ducreyi (strain 35000HP / ATCC 700724).